Consider the following 561-residue polypeptide: Arginine--tRNA ligase (561 aa).

Positions 128–138 (ANPTGPLHVGH) match the 'HIGH' region motif.

It belongs to the class-I aminoacyl-tRNA synthetase family. As to quaternary structure, monomer.

It localises to the cytoplasm. It catalyses the reaction tRNA(Arg) + L-arginine + ATP = L-arginyl-tRNA(Arg) + AMP + diphosphate. This is Arginine--tRNA ligase from Leptothrix cholodnii (strain ATCC 51168 / LMG 8142 / SP-6) (Leptothrix discophora (strain SP-6)).